A 55-amino-acid polypeptide reads, in one-letter code: Large ribosomal subunit protein bL33 (55 aa).

The protein belongs to the bacterial ribosomal protein bL33 family.

The chain is Large ribosomal subunit protein bL33 from Granulibacter bethesdensis (strain ATCC BAA-1260 / CGDNIH1).